Reading from the N-terminus, the 407-residue chain is MAQPTAVRLFTSESVTEGHPDKICDAISDTILDALLEKDPQSRVAVETVVTTGIVHVVGEVRTSAYVEIPQLVRNKLIEIGFNSSEVGFDGRTCGVSVSIGEQSQEIADGVDNSDEARTNGDVEEDDRAGAGDQGLMFGYATNETEEYMPLPIALAHRLSRRLTQVRKEGIVPHLRPDGKTQVTFAYDAQDRPSHLDTVVISTQHDPEVDRAWLETQLREHVIDWVIKDAGIEDLATGEITVLINPSGSFILGGPMGDAGLTGRKIIVDTYGGMARHGGGAFSGKDPSKVDRSAAYAMRWVAKNIVAAGLADRAEVQVAYAIGRAKPVGLYVETFDTNKEGLSDEQIQAAVLEVFDLRPAAIIRELDLLRPIYADTAAYGHFGRTDLDLPWEAIDRVDELRAALKLA.

ATP is bound at residue H19. D21 is a Mg(2+) binding site. E47 is a K(+) binding site. Positions 60 and 103 each coordinate L-methionine. Positions Q103 to N113 are flexible loop. The segment at I107 to Q134 is disordered. Residues D178 to K180, D258, R264 to K265, A281, and K285 contribute to the ATP site. D258 is an L-methionine binding site. K289 lines the L-methionine pocket.

Belongs to the AdoMet synthase family. As to quaternary structure, homotetramer; dimer of dimers. The cofactor is Mg(2+). It depends on K(+) as a cofactor.

The protein resides in the cytoplasm. The catalysed reaction is L-methionine + ATP + H2O = S-adenosyl-L-methionine + phosphate + diphosphate. It participates in amino-acid biosynthesis; S-adenosyl-L-methionine biosynthesis; S-adenosyl-L-methionine from L-methionine: step 1/1. In terms of biological role, catalyzes the formation of S-adenosylmethionine (AdoMet) from methionine and ATP. The overall synthetic reaction is composed of two sequential steps, AdoMet formation and the subsequent tripolyphosphate hydrolysis which occurs prior to release of AdoMet from the enzyme. This Corynebacterium glutamicum (strain ATCC 13032 / DSM 20300 / JCM 1318 / BCRC 11384 / CCUG 27702 / LMG 3730 / NBRC 12168 / NCIMB 10025 / NRRL B-2784 / 534) protein is S-adenosylmethionine synthase.